The primary structure comprises 1578 residues: MTGPTKISILGQESIVADFGLWRNYVAKDLISGCPSTTYVLITDTNIGSIYTPGFQKSFEEAAASVSPSPRLLIYNAPPGEVSKSRQTKADIEDWMLSQSPPCGRDTVVIALGGGVIGDLTGFVAATYMRGVRFVQVPTTLLAMVDSSIGGKTAIDTPLGKNLIGAIWQPSRIYIDLEFLETLPVREFINGMAEVIKTAAISSEEEFTALEDNAETILSAVRREVKPGQRRFEGIEEILKARILASARHKAFVVSADEREGGLRNLLNWGHSIGHAIEAILTPQILHGECVAIGMVKEAELARHLGILKGVAVARIVKCIAAYGLPTSLKDSRIRKLTAGKHCSVDQILFNMALDKKNDGPKKKIVLLSAIGRTYEPRASVVPNEDIGVVLAPSIEVYPGVSPASEVVCAPPGSKSISNRALVLAALGSGTVRIKNLLHSDDTEVMLNALERLGAATFSWEEEGEVLVVNGKGGALQAHPSPLYLGNAGTASRFLTTVATLATASSVDSSVLTGNNRMKQRPIGDLVDALTANGAQIEYVENKGSLPLKIAASGGFTGGQINLAAKVSSQYVSSLLMCAPYAKEPVTLKLVGGKPISQPYIDMTTAMMRSFGIDVKKSTTEEHTYHIPQGRYINPAEYVVESDASSATYPLAIAAVTGTTCTIPNIGSKSLQGDARFAVDVLRPMGCTVEQTDTSTTVTGPADGVLRPLPNVDMEPMTDAFLGASVLAAIARGKDSNHTTRIYGIANQRVKECNRIKAMHDELAKFGVVCREHDDGLEIDGIDRSTLRQPAGGVFCYDDHRVAFSFSVLSLVAPKPTLILEKECVGKTWPGWWDTLRQKFAVKLEGKELKEAESPVLTRAEKASASVFIIGMRGAGKTTSGNWVASTLKRPFIDLDDELERIEGMTIPDIIKQRGWQGFRDAELSLLQRTMKERPTGHVFACGGGVVEIPEARKLLIDWHKTKGNVLLIMRDIKQVMAFLNIDKTRPAYVEDMLGVWLRRKPWFQECSNIQYYSQHASAGLPRASEDFARFIKFVTGLEDSLSTIKKKQHSFFVSLTLPDVRGADQILEQACVGSDAVELRVDLLEDPDSANGIPTVDFVADQISYLRSRITLPVIFTIRTKGQGGRFPDDAHAEAMQLYRLAVRSGCEFVDLEIAFPDEMLRAVTEMKGYSKIITSHHDPKGELSWANMSWMKYYNRALEYGDVIKLVGVARNLDDNTALRKFKNWAEEAHDVPLIAINMGGNGQLSRILNGFMTPVSHPALPFRAAPGQLSATDIRKGLSLMGEIKKKRFALFGSPISESRSPALHNTLFAEMGLPHEYTRLETANVEDVKDFIRAPDFGGASVTIPLKLDIMPLLDEITAEAEIIGAVNTVVPVSDGEGKPQRLVGHNTDWQGMVQCLRNAGAYGADGNASGLVVGGGGTSRAAIYALHHMGFSPIYIVGRNPAKLESMVATFPTGYNIRIVEGNEKLEHVPHVAIGTIPADRPIDPGMREILCHMFERAQEADADAARTIEGSPRVLLEMAYKPRVTALMQLAVDAGWTTVPGLEALIGQGVHQFQHWTGIRPLYERARAIVLG.

A 3-dehydroquinate synthase region spans residues 1–384; the sequence is MTGPTKISIL…YEPRASVVPN (384 aa). NAD(+) contacts are provided by residues 44–46, 81–84, 114–116, and D119; these read DTN, EVSK, and GGV. R130 provides a ligand contact to 7-phospho-2-dehydro-3-deoxy-D-arabino-heptonate. Residue 139–140 participates in NAD(+) binding; the sequence is TT. 7-phospho-2-dehydro-3-deoxy-D-arabino-heptonate is bound by residues D146 and K152. K161 is an NAD(+) binding site. Position 162 (N162) interacts with 7-phospho-2-dehydro-3-deoxy-D-arabino-heptonate. Residues 179-182 and N190 each bind NAD(+); that span reads FLET. E194 serves as a coordination point for Zn(2+). 7-phospho-2-dehydro-3-deoxy-D-arabino-heptonate contacts are provided by residues 194-197 and K250; that span reads EVIK. The active-site Proton acceptor; for 3-dehydroquinate synthase activity is the E260. 7-phospho-2-dehydro-3-deoxy-D-arabino-heptonate contacts are provided by residues 264-268 and H271; that span reads RNLLN. Residue H271 coordinates Zn(2+). The active-site Proton acceptor; for 3-dehydroquinate synthase activity is H275. Residues H287 and K356 each contribute to the 7-phospho-2-dehydro-3-deoxy-D-arabino-heptonate site. H287 serves as a coordination point for Zn(2+). An EPSP synthase region spans residues 397–842; it reads VYPGVSPASE…WDTLRQKFAV (446 aa). The active-site For EPSP synthase activity is the C824. The interval 864–1055 is shikimate kinase; sequence SASVFIIGMR…KKKQHSFFVS (192 aa). 871–878 is an ATP binding site; that stretch reads GMRGAGKT. Positions 1056-1276 are 3-dehydroquinase; that stretch reads LTLPDVRGAD…AAPGQLSATD (221 aa). The Proton acceptor; for 3-dehydroquinate dehydratase activity role is filled by H1179. The active-site Schiff-base intermediate with substrate; for 3-dehydroquinate dehydratase activity is K1207. The tract at residues 1289 to 1578 is shikimate dehydrogenase; sequence KKRFALFGSP…YERARAIVLG (290 aa).

It in the N-terminal section; belongs to the sugar phosphate cyclases superfamily. Dehydroquinate synthase family. This sequence in the 2nd section; belongs to the EPSP synthase family. In the 3rd section; belongs to the shikimate kinase family. The protein in the 4th section; belongs to the type-I 3-dehydroquinase family. It in the C-terminal section; belongs to the shikimate dehydrogenase family. Homodimer. It depends on Zn(2+) as a cofactor.

Its subcellular location is the cytoplasm. The catalysed reaction is 7-phospho-2-dehydro-3-deoxy-D-arabino-heptonate = 3-dehydroquinate + phosphate. It catalyses the reaction 3-dehydroquinate = 3-dehydroshikimate + H2O. The enzyme catalyses shikimate + NADP(+) = 3-dehydroshikimate + NADPH + H(+). It carries out the reaction shikimate + ATP = 3-phosphoshikimate + ADP + H(+). The catalysed reaction is 3-phosphoshikimate + phosphoenolpyruvate = 5-O-(1-carboxyvinyl)-3-phosphoshikimate + phosphate. The protein operates within metabolic intermediate biosynthesis; chorismate biosynthesis; chorismate from D-erythrose 4-phosphate and phosphoenolpyruvate: step 2/7. It functions in the pathway metabolic intermediate biosynthesis; chorismate biosynthesis; chorismate from D-erythrose 4-phosphate and phosphoenolpyruvate: step 3/7. It participates in metabolic intermediate biosynthesis; chorismate biosynthesis; chorismate from D-erythrose 4-phosphate and phosphoenolpyruvate: step 4/7. Its pathway is metabolic intermediate biosynthesis; chorismate biosynthesis; chorismate from D-erythrose 4-phosphate and phosphoenolpyruvate: step 5/7. The protein operates within metabolic intermediate biosynthesis; chorismate biosynthesis; chorismate from D-erythrose 4-phosphate and phosphoenolpyruvate: step 6/7. The AROM polypeptide catalyzes 5 consecutive enzymatic reactions in prechorismate polyaromatic amino acid biosynthesis. This is Pentafunctional AROM polypeptide from Neosartorya fischeri (strain ATCC 1020 / DSM 3700 / CBS 544.65 / FGSC A1164 / JCM 1740 / NRRL 181 / WB 181) (Aspergillus fischerianus).